The chain runs to 620 residues: DNA mismatch repair protein MutL (620 aa).

This sequence belongs to the DNA mismatch repair MutL/HexB family.

This protein is involved in the repair of mismatches in DNA. It is required for dam-dependent methyl-directed DNA mismatch repair. May act as a 'molecular matchmaker', a protein that promotes the formation of a stable complex between two or more DNA-binding proteins in an ATP-dependent manner without itself being part of a final effector complex. The polypeptide is DNA mismatch repair protein MutL (Clostridium tetani (strain Massachusetts / E88)).